A 415-amino-acid chain; its full sequence is Metal tolerance protein 5 (415 aa).

The Cytoplasmic segment spans residues 1–124 (MAAAVAGGGE…REKVARSETL (124 aa)). The chain crosses the membrane as a helical span at residues 125 to 145 (AIRLSNIANMVLFAAKVYASV). Topologically, residues 146–150 (RSGSL) are vacuolar. A helical transmembrane segment spans residues 151-171 (AIIASTLDSLLDLLSGFILWF). Topologically, residues 172 to 192 (TAFSMQTPNPYRYPIGKKRMQ) are cytoplasmic. The helical transmembrane segment at 193–213 (PLGILVFASVMATLGLQIILE) threads the bilayer. The Vacuolar segment spans residues 214-232 (SVRSLLSDGDEFSLTKEQE). A helical transmembrane segment spans residues 233–253 (KWVVDIMLAVTLVKLALVLYC). At 254–268 (RTFTNEIVKAYAQDH) the chain is on the cytoplasmic side. Residues 269 to 291 (FFDVITNMIGLVAALLATYIEGW) traverse the membrane as a helical segment. The Vacuolar segment spans residues 292-293 (ID). Residues 294 to 313 (PVGAIILAIYTIRTWSMTVL) traverse the membrane as a helical segment. At 314 to 415 (ENVHSLVGQS…RPEHALSHEK (102 aa)) the chain is on the cytoplasmic side.

The protein belongs to the cation diffusion facilitator (CDF) transporter (TC 2.A.4) family. SLC30A subfamily.

Its subcellular location is the vacuole membrane. Functionally, involved in sequestration of excess metal in the cytoplasm into vacuoles to maintain metal homeostasis. This chain is Metal tolerance protein 5 (MTP5), found in Oryza sativa subsp. japonica (Rice).